We begin with the raw amino-acid sequence, 391 residues long: Tryptophan synthase beta chain (391 aa).

At K84 the chain carries N6-(pyridoxal phosphate)lysine.

This sequence belongs to the TrpB family. In terms of assembly, tetramer of two alpha and two beta chains. It depends on pyridoxal 5'-phosphate as a cofactor.

It catalyses the reaction (1S,2R)-1-C-(indol-3-yl)glycerol 3-phosphate + L-serine = D-glyceraldehyde 3-phosphate + L-tryptophan + H2O. It participates in amino-acid biosynthesis; L-tryptophan biosynthesis; L-tryptophan from chorismate: step 5/5. Functionally, the beta subunit is responsible for the synthesis of L-tryptophan from indole and L-serine. This is Tryptophan synthase beta chain from Thermoanaerobacter pseudethanolicus (strain ATCC 33223 / 39E) (Clostridium thermohydrosulfuricum).